The sequence spans 456 residues: Asparagine--tRNA ligase (456 aa).

It belongs to the class-II aminoacyl-tRNA synthetase family. As to quaternary structure, homodimer.

It localises to the cytoplasm. The catalysed reaction is tRNA(Asn) + L-asparagine + ATP = L-asparaginyl-tRNA(Asn) + AMP + diphosphate + H(+). The polypeptide is Asparagine--tRNA ligase (Mycoplasma genitalium (strain ATCC 33530 / DSM 19775 / NCTC 10195 / G37) (Mycoplasmoides genitalium)).